The primary structure comprises 63 residues: Large ribosomal subunit protein uL29 (63 aa).

Belongs to the universal ribosomal protein uL29 family.

The protein is Large ribosomal subunit protein uL29 of Neisseria meningitidis serogroup C (strain 053442).